A 201-amino-acid chain; its full sequence is Receptor expression-enhancing protein 6 (201 aa).

3 helical membrane-spanning segments follow: residues 36 to 56 (LAAG…GASL), 89 to 109 (WVVY…LFWF), and 117 to 137 (CAFL…LLYH).

Belongs to the DP1 family. As to quaternary structure, interacts with STX3. Interacts with clathrin. Expressed in the inner segment of rod photoreceptors and outer plexiform layer of the retina (at protein level). Expressed in liver, but not detected in brain, muscle, kidney, retinal cone photoreceptors or retinal ganglion cells (at protein level). Highly expressed in the ganglion cell layer of the retina and in liver, and also detected at low levels in kidney and testis. Isoform 1: Expressed in the retina. Isoform 2: Expressed in liver.

Its subcellular location is the endoplasmic reticulum membrane. The protein resides in the cytoplasmic vesicle. The protein localises to the clathrin-coated vesicle membrane. Its function is as follows. Required for correct function and survival of retinal photoreceptors. Required for retinal development. In rod photoreceptors, facilitates stability and/or trafficking of guanylate cyclases and is required to maintain endoplasmic reticulum and mitochondrial homeostasis. May play a role in clathrin-coated intracellular vesicle trafficking of proteins from the endoplasmic reticulum to the retinal rod plasma membrane. This chain is Receptor expression-enhancing protein 6 (Reep6), found in Mus musculus (Mouse).